Consider the following 695-residue polypeptide: Cysteine-rich receptor-like protein kinase 6 (695 aa).

Positions 1-31 (MRRHRPYLDGVAAAAATFLLAVLLHAPLAAG) are cleaved as a signal peptide. At 32-294 (EDEPPPWVLC…ATSGEKTKNR (263 aa)) the chain is on the extracellular side. 2 Gnk2-homologous domains span residues 38–142 (WVLC…NRDF) and 151–261 (TTYT…VFPF). N-linked (GlcNAc...) asparagine glycosylation is found at Asn-49, Asn-53, Asn-70, and Asn-101. Intrachain disulfides connect Cys-96–Cys-105 and Cys-108–Cys-133. A glycan (N-linked (GlcNAc...) asparagine) is linked at Asn-178. Intrachain disulfides connect Cys-215-Cys-224 and Cys-227-Cys-252. A helical membrane pass occupies residues 295 to 315 (IGTVLAIVMPAIAAILLMVVA). At 316-695 (CFCCWKRIKK…DLSITELVPR (380 aa)) the chain is on the cytoplasmic side. Residues 363–634 (FADTKMIGQG…PTISSVNIML (272 aa)) enclose the Protein kinase domain. Residues 369-377 (IGQGGFGMV) and Lys-391 each bind ATP. Catalysis depends on Asp-488, which acts as the Proton acceptor. Residues 658 to 682 (DSSNPYSERYPRPRHSGYSDNSTVV) are disordered.

Belongs to the protein kinase superfamily. Ser/Thr protein kinase family. CRK subfamily.

The protein resides in the membrane. Involved in disease resistance. Required for NPR1/NH1-mediated immunity to the bacterial blight pathogen Xanthomomas oryzae pv. oryzae (Xoo). Required for the benzothiadiazole (BTH)-induced immune response. Possesses kinase activity in vitro. The polypeptide is Cysteine-rich receptor-like protein kinase 6 (Oryza sativa subsp. japonica (Rice)).